We begin with the raw amino-acid sequence, 631 residues long: Methanol dehydrogenase [cytochrome c] subunit 1 (631 aa).

The N-terminal stretch at 1-32 is a signal peptide; sequence MNRNTPKARGASSLAMAVAMGLAVLTTAPATA. An intrachain disulfide couples cysteine 135 to cysteine 136. Residues glutamate 209 and asparagine 293 each contribute to the Ca(2+) site. Aspartate 335 serves as the catalytic Proton acceptor. An intrachain disulfide couples cysteine 418 to cysteine 447.

This sequence belongs to the bacterial PQQ dehydrogenase family. Heterotetramer composed of 2 alpha and 2 beta subunits. The cofactor is pyrroloquinoline quinone. Requires Ca(2+) as cofactor.

It is found in the periplasm. The enzyme catalyses 2 Fe(III)-[cytochrome cL] + a primary alcohol = 2 Fe(II)-[cytochrome cL] + an aldehyde + 2 H(+). Catalyzes the oxidation of primary alcohols including methanol. The chain is Methanol dehydrogenase [cytochrome c] subunit 1 (moxF) from Paracoccus denitrificans.